The sequence spans 493 residues: Cyclin-dependent kinase-like 2 (493 aa).

The region spanning Tyr4–Phe287 is the Protein kinase domain. Residues Val10–Val18 and Lys33 contribute to the ATP site. The [NKR]KIAxRE signature appears at Lys45–Glu51. Residue Asp126 is the Proton acceptor of the active site. Disordered stretches follow at residues Val311 to Val338 and Gly363 to Ser384. Basic and acidic residues predominate over residues Arg320 to Thr336.

Belongs to the protein kinase superfamily. CMGC Ser/Thr protein kinase family. CDC2/CDKX subfamily.

The protein resides in the cytoplasm. It localises to the nucleus. It carries out the reaction L-seryl-[protein] + ATP = O-phospho-L-seryl-[protein] + ADP + H(+). The enzyme catalyses L-threonyl-[protein] + ATP = O-phospho-L-threonyl-[protein] + ADP + H(+). This chain is Cyclin-dependent kinase-like 2, found in Pongo abelii (Sumatran orangutan).